Reading from the N-terminus, the 27-residue chain is Phospholipase A2 1 (27 aa).

It belongs to the phospholipase A2 family. Group I subfamily. It depends on Ca(2+) as a cofactor. Expressed by the venom gland.

The protein localises to the secreted. It carries out the reaction a 1,2-diacyl-sn-glycero-3-phosphocholine + H2O = a 1-acyl-sn-glycero-3-phosphocholine + a fatty acid + H(+). In terms of biological role, snake venom phospholipase A2 (PLA2) that inhibits neuromuscular transmission by blocking acetylcholine release from the nerve termini. PLA2 catalyzes the calcium-dependent hydrolysis of the 2-acyl groups in 3-sn-phosphoglycerides. The polypeptide is Phospholipase A2 1 (Micrurus nigrocinctus (Central American coral snake)).